The sequence spans 225 residues: NAD(P)H-hydrate epimerase (225 aa).

Residues 9–209 (MQTIDNYTVE…DIGLLTPQDF (201 aa)) form the YjeF N-terminal domain. A (6S)-NADPHX-binding site is contributed by 57–61 (NNGAD). Residues Asn58 and Asp119 each coordinate K(+). (6S)-NADPHX contacts are provided by residues 123–129 (GTGLNNL) and Asp152. A K(+)-binding site is contributed by Thr155.

This sequence belongs to the NnrE/AIBP family. The cofactor is K(+).

The enzyme catalyses (6R)-NADHX = (6S)-NADHX. The catalysed reaction is (6R)-NADPHX = (6S)-NADPHX. In terms of biological role, catalyzes the epimerization of the S- and R-forms of NAD(P)HX, a damaged form of NAD(P)H that is a result of enzymatic or heat-dependent hydration. This is a prerequisite for the S-specific NAD(P)H-hydrate dehydratase to allow the repair of both epimers of NAD(P)HX. The polypeptide is NAD(P)H-hydrate epimerase (Leuconostoc kimchii (strain IMSNU 11154 / KCTC 2386 / IH25)).